The following is a 174-amino-acid chain: Magnetosome protein MamT (174 aa).

Residues 1–9 are Cytoplasmic-facing; sequence MGTPGGGRR. The chain crosses the membrane as a helical span at residues 10 to 28; that stretch reads WMTLISITLLMVVGLGLYW. Residues 29 to 174 lie on the Lumenal side of the membrane; it reads DELSLSAGIS…EKKSGIKWLL (146 aa). The MCR (magnetochrome) 1 motif lies at 87–107; it reads VMPGTGMPHPYVGDCIQCHLM. Heme-binding residues include Cys-101, Cys-104, His-105, Cys-152, Cys-155, and His-156. The MCR 2 motif lies at 138 to 158; that stretch reads ILPTTRQPHPPAGRCIKCHDI.

Belongs to the magnetosome MamT family. The cofactor is heme.

The protein resides in the magnetosome membrane. Its function is as follows. May play a role in magnetite crystal maturation. May transfer electrons to balance the Fe(2+)-Fe(3+) ratio during magnetite formation. This is Magnetosome protein MamT from Magnetospirillum gryphiswaldense (strain DSM 6361 / JCM 21280 / NBRC 15271 / MSR-1).